Consider the following 258-residue polypeptide: Putative gamma-secretase subunit APH-1C (258 aa).

A run of 7 helical transmembrane segments spans residues 5–25, 32–52, 71–91, 116–136, 161–181, 187–207, and 214–234; these read VFFGCAFIAFGPAFALYLFTI, VIFLIAGAFFWLVSLLLSSMF, LLIFGALLSVCIQELFRLAYY, LLAYVSGLGFGIMSGVFSFVN, AFMTLVVIMLHVFWGVVFFDG, WYTLLTVLLTHLVVSTQTFLS, and LVTAYIIMVLMGIWAFYVAGG.

This sequence belongs to the APH-1 family. In terms of assembly, potential component of the gamma-secretase complex.

The protein localises to the membrane. Potential subunit of the gamma-secretase complex, an endoprotease complex that catalyzes the intramembrane cleavage of integral proteins such as Notch receptors and APP (amyloid-beta precursor protein). The polypeptide is Putative gamma-secretase subunit APH-1C (Aph1c) (Mus musculus (Mouse)).